We begin with the raw amino-acid sequence, 137 residues long: uncharacterized protein (137 aa).

Residues 4 to 73 (MLTVSEVARK…LEEIADILHL (70 aa)) form the HTH merR-type domain. Positions 8–27 (SEVARKLGLNPQTLYFYERI) form a DNA-binding region, H-T-H motif.

This is an uncharacterized protein from Synechocystis sp. (strain ATCC 27184 / PCC 6803 / Kazusa).